The chain runs to 940 residues: Nitrogen permease regulator 3 (940 aa).

A signal peptide spans 1 to 21; the sequence is MYTNLPKACLTGIVLTISTHS. Over residues 37–52 the composition is skewed to basic and acidic residues; that stretch reads EARRGRKVDSRNERVR. 3 disordered regions span residues 37 to 155, 317 to 387, and 812 to 848; these read EARR…PSES, RKQK…EQSD, and EHRQ…ANIS. Residues 61 to 72 show a composition bias toward low complexity; it reads SAASGAVDAVGE. Acidic residues predominate over residues 75-84; sequence DGLEEESSES. Residues 123–133 show a composition bias toward low complexity; sequence SSAVGGSSAAE. Composition is skewed to polar residues over residues 324–336 and 355–378; these read QQTN…SSSG and ERQP…SESG.

Belongs to the NPR3 family.

Its function is as follows. Mediates inactivation of the TORC1 complex in response to amino acid starvation. Required for meiotic nuclear division. The polypeptide is Nitrogen permease regulator 3 (NPR3) (Eremothecium gossypii (strain ATCC 10895 / CBS 109.51 / FGSC 9923 / NRRL Y-1056) (Yeast)).